The sequence spans 810 residues: Cation/H(+) antiporter 18 (810 aa).

The next 12 helical transmembrane spans lie at 29–49 (FALPLAILQIVIVIVLTRVLA), 59–76 (RVIAEVIGGIMLGPSLLG), 91–111 (LTVLETLANLGLLFFLFLAGL), 126–146 (LGIALAGITLPFALGIGSSFV), 157–177 (STAFLVFMGVALSITAFPVLA), 193–213 (LAMSAAAVNDVAAWILLALAI), 223–243 (LVSLWVFLSGCAFVIGASFII), 277–297 (FITDAIGIHSMFGAFVVGVLI), 314–334 (LVSGLFLPLYFVASGLKTNVA), 343–363 (GLLVLVTATACFGKILGTLGV), 374–394 (AITLGFLMNTKGLVELIVLNI), and 406–426 (FAIMVLMALFTTFITTPVVMA). Ser-804 is subject to Phosphoserine.

The protein belongs to the monovalent cation:proton antiporter 2 (CPA2) transporter (TC 2.A.37) family. CHX (TC 2.A.37.4) subfamily. In terms of tissue distribution, expressed in roots.

Its subcellular location is the membrane. Its function is as follows. May operate as a cation/H(+) antiporter. The polypeptide is Cation/H(+) antiporter 18 (CHX18) (Arabidopsis thaliana (Mouse-ear cress)).